Reading from the N-terminus, the 108-residue chain is Putative septation protein SpoVG (108 aa).

The segment at 84 to 108 (FEKQSSVETEPVTEENMETAENENE) is disordered. The span at 94 to 108 (PVTEENMETAENENE) shows a compositional bias: acidic residues.

It belongs to the SpoVG family.

Could be involved in septation. In Finegoldia magna (strain ATCC 29328 / DSM 20472 / WAL 2508) (Peptostreptococcus magnus), this protein is Putative septation protein SpoVG.